A 424-amino-acid chain; its full sequence is Cysteate synthase (424 aa).

N6-(pyridoxal phosphate)lysine is present on Lys-106. Residues Asn-132 and Thr-381 each coordinate pyridoxal 5'-phosphate.

Belongs to the threonine synthase family. Cysteate synthase subfamily. Homotrimer. The cofactor is pyridoxal 5'-phosphate.

The enzyme catalyses O-phospho-L-serine + sulfite + H(+) = L-cysteate + phosphate. It participates in cofactor biosynthesis; coenzyme M biosynthesis. Specifically catalyzes the beta-elimination of phosphate from L-phosphoserine and the beta-addition of sulfite to the dehydroalanine intermediate to produce L-cysteate. This Methanoregula boonei (strain DSM 21154 / JCM 14090 / 6A8) protein is Cysteate synthase.